The chain runs to 266 residues: uncharacterized protein (266 aa).

The region spanning 112-261 is the TIR domain; sequence LEKKIFISHS…KKWERIKAKF (150 aa). The active site involves glutamate 192.

The catalysed reaction is NAD(+) + H2O = ADP-D-ribose + nicotinamide + H(+). This is an uncharacterized protein from Bacillus subtilis (strain 168).